A 271-amino-acid chain; its full sequence is Inactive phospholipid phosphatase 7 (271 aa).

The tract at residues 1-69 (MPVSQSRARA…RQSQQLPEED (69 aa)) is disordered. At 1 to 112 (MPVSQSRARA…AASWASARSM (112 aa)) the chain is on the cytoplasmic side. Residues 24-36 (SLNQPPKGTQEPR) are compositionally biased toward polar residues. Phosphoserine is present on residues Ser-43 and Ser-62. The interval 70–91 (CMQLNPSFKGIAFNSLLAIDIC) is interaction with MTOR. The chain crosses the membrane as a helical span at residues 113–133 (VKLIGITSHGIPWIGGTILCL). The Extracellular portion of the chain corresponds to 134 to 141 (VRSSTLAG). The helical transmembrane segment at 142-162 (QEVLMNLLLALLLDIMTVAGV) threads the bilayer. At 163–202 (QKLIKRRGPYETSPGLLDYLTMDIYAFPAGHASRAAMVSK) the chain is on the cytoplasmic side. The helical transmembrane segment at 203–223 (FFLSHLVLAVPLRVLLVLWAF) threads the bilayer. The Extracellular portion of the chain corresponds to 224–239 (CVGLSRVMIGRHHITD). Residues 240-260 (VISGFIIGYFQFRLVELVWMS) traverse the membrane as a helical segment. At 261–271 (SNTCQMLISAW) the chain is on the cytoplasmic side.

This sequence belongs to the PA-phosphatase related phosphoesterase family. As to quaternary structure, homo- and heterooligomer. Interacts with MTOR; controls MTOR-dependent IGF2 expression during myoblast differentiation.

It is found in the nucleus envelope. It localises to the endoplasmic reticulum membrane. The protein localises to the membrane. Functionally, plays a role as negative regulator of myoblast differentiation, in part through effects on MTOR signaling. Has no detectable enzymatic activity. In Rattus norvegicus (Rat), this protein is Inactive phospholipid phosphatase 7.